A 237-amino-acid polypeptide reads, in one-letter code: Lectin (237 aa).

The Mn(2+) site is built by glutamate 8 and aspartate 10. Residues aspartate 10, tyrosine 12, asparagine 14, and aspartate 19 each contribute to the Ca(2+) site. A carbohydrate-binding residues include tyrosine 12 and asparagine 14. Mn(2+)-binding residues include aspartate 19 and histidine 24. 98 to 100 (GLY) contacts a carbohydrate. Aspartate 208 provides a ligand contact to Ca(2+). 2 residues coordinate a carbohydrate: glycine 227 and arginine 228.

The protein belongs to the leguminous lectin family. Homotetramer; dimer of dimers. Concanavalin A-like lectins of the Diocleinae subtribe undergo proteolytic processing referred to as circular permutation. The propeptide is split into an N-terminal and a C-terminal part, the gamma and beta chain, respectively. These are then religated in beta-gamma order to form the mature alpha chain. The beta and gamma chains can often be detected in cell extracts. Residues 1-118 of the mature chain, as displayed here, probably constitute the beta chain in the propeptide, residues 119-237 the gamma chain.

Functionally, D-mannose/D-glucose-binding lectin with hemagglutinating activity towards rabbit and human erythrocytes. In rats, induces dose-dependent paw edema. Has low cytotoxicity against Artemisia sp. The polypeptide is Lectin (Macropsychanthus comosus (Sea purse)).